The chain runs to 532 residues: 3-hydroxy-3-methylglutaryl-coenzyme A reductase 1 (532 aa).

A helical membrane pass occupies residues Phe-63–Thr-83. The tract at residues Asp-77–Asp-117 is linker. The interval Ala-78–Gly-111 is disordered. The segment covering Pro-98 to His-107 has biased composition (low complexity). The interval Asp-118–Ser-532 is catalytic. The Charge relay system role is filled by Glu-211. The N-linked (GlcNAc...) asparagine glycan is linked to Asn-275. Catalysis depends on charge relay system residues Lys-343 and Asp-419. Residue His-517 is the Proton donor of the active site. Asn-521 carries N-linked (GlcNAc...) asparagine glycosylation.

Belongs to the HMG-CoA reductase family.

The protein localises to the endoplasmic reticulum membrane. It carries out the reaction (R)-mevalonate + 2 NADP(+) + CoA = (3S)-3-hydroxy-3-methylglutaryl-CoA + 2 NADPH + 2 H(+). It functions in the pathway metabolic intermediate biosynthesis; (R)-mevalonate biosynthesis; (R)-mevalonate from acetyl-CoA: step 3/3. Its function is as follows. Catalyzes the synthesis of mevalonate. The specific precursor of all isoprenoid compounds present in plants. The protein is 3-hydroxy-3-methylglutaryl-coenzyme A reductase 1 (HMG1) of Oryza sativa subsp. japonica (Rice).